A 144-amino-acid chain; its full sequence is Toxin MT0934 (144 aa).

Functionally, toxic component of a type II toxin-antitoxin (TA) system. Its toxic effect is neutralized by coexpression with cognate antitoxin MT0933. This is Toxin MT0934 from Mycobacterium tuberculosis (strain CDC 1551 / Oshkosh).